The sequence spans 175 residues: NADH dehydrogenase [ubiquinone] iron-sulfur protein 4, mitochondrial (175 aa).

The N-terminal 42 residues, 1-42 (MAAVSMSVVLRQTLWRRRAVAVAALSVSRVPTRSLRTSTWRL), are a transit peptide targeting the mitochondrion. The tract at residues 151 to 175 (KVPKPKSKSYGANFSWNKRTRVSTK) is disordered. At serine 173 the chain carries Phosphoserine; by PKA.

Belongs to the complex I NDUFS4 subunit family. Mammalian complex I is composed of 45 different subunits. This is a component of the iron-sulfur (IP) fragment of the enzyme. Interacts with BCAP31 and TOMM40; the interaction mediates its translocation to the mitochondria; the interaction with BCAP31 is direct.

It localises to the mitochondrion inner membrane. In terms of biological role, accessory subunit of the mitochondrial membrane respiratory chain NADH dehydrogenase (Complex I), that is believed not to be involved in catalysis. Complex I functions in the transfer of electrons from NADH to the respiratory chain. The immediate electron acceptor for the enzyme is believed to be ubiquinone. The protein is NADH dehydrogenase [ubiquinone] iron-sulfur protein 4, mitochondrial (NDUFS4) of Homo sapiens (Human).